Reading from the N-terminus, the 399-residue chain is MMVHCAGCERPILDRFLLNVLDRAWHAKCVQCCECNCNLTEKCFSRDGKLYCKIDFFRRFGTKCAGCLQGISPSDLVRRARSKVFHLNCFTCMVCNKQLSTGEELYVIDENKFVCKEDYLSASAIKEVNLNSVSSCTDRSLSPDLPDQIQDDTKETDNSTSSDKDTNNNENEEQNSCTKRRGPRTTIKAKQLETLKAAFVATPKPTRHIREQLAQETGLNMRVIQVWFQNRRSKERRMKQLSALGARRHAFFRGPRRMRPLGGRLEDPDIMGPGGYSYYGEYQGDYYGPVVNYDFFPHGPPSSQAHSPAESPYLLSSGSGALEGGPVSAHHPSDDQRFTDMISHADTPSPEPGMTGPLHSNPQGEGGFTGSPPFPLANNTSYSGPMSHPGQEMGENTVW.

LIM zinc-binding domains follow at residues 3–61 (VHCA…RRFG) and 62–125 (TKCA…ASAI). Disordered stretches follow at residues 136 to 185 (CTDR…GPRT) and 301 to 399 (PSSQ…NTVW). Residues 151–167 (DDTKETDNSTSSDKDTN) show a composition bias toward basic and acidic residues. Residues 180–239 (RRGPRTTIKAKQLETLKAAFVATPKPTRHIREQLAQETGLNMRVIQVWFQNRRSKERRMK) constitute a DNA-binding region (homeobox).

It localises to the nucleus. Probably involved in the patterning of the nervous system, in particular in the early specification of the diencephalon. The polypeptide is LIM/homeobox protein Lhx5 (lhx5) (Danio rerio (Zebrafish)).